A 322-amino-acid polypeptide reads, in one-letter code: 4-hydroxythreonine-4-phosphate dehydrogenase (322 aa).

Position 132 (Thr132) interacts with substrate. Residues His160, His205, and His260 each contribute to the a divalent metal cation site. Positions 268, 277, and 286 each coordinate substrate.

Belongs to the PdxA family. Homodimer. It depends on Zn(2+) as a cofactor. Mg(2+) is required as a cofactor. Requires Co(2+) as cofactor.

Its subcellular location is the cytoplasm. It catalyses the reaction 4-(phosphooxy)-L-threonine + NAD(+) = 3-amino-2-oxopropyl phosphate + CO2 + NADH. It participates in cofactor biosynthesis; pyridoxine 5'-phosphate biosynthesis; pyridoxine 5'-phosphate from D-erythrose 4-phosphate: step 4/5. Its function is as follows. Catalyzes the NAD(P)-dependent oxidation of 4-(phosphooxy)-L-threonine (HTP) into 2-amino-3-oxo-4-(phosphooxy)butyric acid which spontaneously decarboxylates to form 3-amino-2-oxopropyl phosphate (AHAP). The chain is 4-hydroxythreonine-4-phosphate dehydrogenase from Xanthomonas oryzae pv. oryzae (strain PXO99A).